We begin with the raw amino-acid sequence, 449 residues long: Glucose-6-phosphate isomerase (449 aa).

Glu-291 acts as the Proton donor in catalysis. Residues His-312 and Lys-426 contribute to the active site.

It belongs to the GPI family.

It localises to the cytoplasm. It catalyses the reaction alpha-D-glucose 6-phosphate = beta-D-fructose 6-phosphate. It participates in carbohydrate biosynthesis; gluconeogenesis. The protein operates within carbohydrate degradation; glycolysis; D-glyceraldehyde 3-phosphate and glycerone phosphate from D-glucose: step 2/4. In terms of biological role, catalyzes the reversible isomerization of glucose-6-phosphate to fructose-6-phosphate. The polypeptide is Glucose-6-phosphate isomerase (Streptococcus pyogenes serotype M18 (strain MGAS8232)).